We begin with the raw amino-acid sequence, 241 residues long: Adenosylcobinamide-GDP ribazoletransferase (241 aa).

The next 4 helical transmembrane spans lie at 34 to 54 (LGLP…AWAF), 108 to 128 (VGGL…FGWI), 184 to 206 (LPFS…WTCL), and 220 to 240 (FLGA…SSLP).

The protein belongs to the CobS family. Requires Mg(2+) as cofactor.

It is found in the cell membrane. The catalysed reaction is alpha-ribazole + adenosylcob(III)inamide-GDP = adenosylcob(III)alamin + GMP + H(+). It catalyses the reaction alpha-ribazole 5'-phosphate + adenosylcob(III)inamide-GDP = adenosylcob(III)alamin 5'-phosphate + GMP + H(+). It participates in cofactor biosynthesis; adenosylcobalamin biosynthesis; adenosylcobalamin from cob(II)yrinate a,c-diamide: step 7/7. Its function is as follows. Joins adenosylcobinamide-GDP and alpha-ribazole to generate adenosylcobalamin (Ado-cobalamin). Also synthesizes adenosylcobalamin 5'-phosphate from adenosylcobinamide-GDP and alpha-ribazole 5'-phosphate. In Methanopyrus kandleri (strain AV19 / DSM 6324 / JCM 9639 / NBRC 100938), this protein is Adenosylcobinamide-GDP ribazoletransferase.